Consider the following 527-residue polypeptide: UPF0053 protein YegH (527 aa).

5 consecutive transmembrane segments (helical) span residues 14–34 (ITLI…IAIL), 51–71 (LLLA…LVTL), 81–101 (FTFS…LFKA), 145–165 (ITAV…VIAI), and 185–205 (IVIL…AEGF). 2 CBS domains span residues 306-366 (MTSR…GEPL) and 371-429 (LIRQ…PNEV).

It belongs to the UPF0053 family.

The protein resides in the cell membrane. This is UPF0053 protein YegH (yegH) from Escherichia coli (strain K12).